A 369-amino-acid chain; its full sequence is Phospho-N-acetylmuramoyl-pentapeptide-transferase (369 aa).

The next 10 helical transmembrane spans lie at 2 to 22, 55 to 75, 86 to 106, 122 to 142, 158 to 178, 196 to 216, 239 to 259, 266 to 286, 291 to 311, and 348 to 368; these read IALL…TPLF, TVVV…MWMM, ALLL…DDFI, LVLQ…FPNA, IPWL…FVLW, LDGL…LMGI, PLDL…FLWW, IFMG…FAIL, LLLA…IIQV, and ILGG…WVVL.

The protein belongs to the glycosyltransferase 4 family. MraY subfamily. Mg(2+) is required as a cofactor.

It localises to the cell membrane. The enzyme catalyses UDP-N-acetyl-alpha-D-muramoyl-L-alanyl-gamma-D-glutamyl-meso-2,6-diaminopimeloyl-D-alanyl-D-alanine + di-trans,octa-cis-undecaprenyl phosphate = di-trans,octa-cis-undecaprenyl diphospho-N-acetyl-alpha-D-muramoyl-L-alanyl-D-glutamyl-meso-2,6-diaminopimeloyl-D-alanyl-D-alanine + UMP. Its pathway is cell wall biogenesis; peptidoglycan biosynthesis. In terms of biological role, catalyzes the initial step of the lipid cycle reactions in the biosynthesis of the cell wall peptidoglycan: transfers peptidoglycan precursor phospho-MurNAc-pentapeptide from UDP-MurNAc-pentapeptide onto the lipid carrier undecaprenyl phosphate, yielding undecaprenyl-pyrophosphoryl-MurNAc-pentapeptide, known as lipid I. This chain is Phospho-N-acetylmuramoyl-pentapeptide-transferase, found in Arthrobacter sp. (strain FB24).